A 585-amino-acid chain; its full sequence is tRNA 5-methylaminomethyl-2-thiouridine biosynthesis bifunctional protein MnmC (585 aa).

The interval 1 to 236 (MTPDGLYCDP…KRERLEAVWP (236 aa)) is tRNA (mnm(5)s(2)U34)-methyltransferase. The segment at 254 to 585 (LGAGIAGASL…SRRAGQGAAG (332 aa)) is FAD-dependent cmnm(5)s(2)U34 oxidoreductase. The interval 564–585 (EAMAPGRFAERRSRRAGQGAAG) is disordered.

This sequence in the N-terminal section; belongs to the methyltransferase superfamily. tRNA (mnm(5)s(2)U34)-methyltransferase family. In the C-terminal section; belongs to the DAO family. FAD is required as a cofactor.

The protein resides in the cytoplasm. The catalysed reaction is 5-aminomethyl-2-thiouridine(34) in tRNA + S-adenosyl-L-methionine = 5-methylaminomethyl-2-thiouridine(34) in tRNA + S-adenosyl-L-homocysteine + H(+). In terms of biological role, catalyzes the last two steps in the biosynthesis of 5-methylaminomethyl-2-thiouridine (mnm(5)s(2)U) at the wobble position (U34) in tRNA. Catalyzes the FAD-dependent demodification of cmnm(5)s(2)U34 to nm(5)s(2)U34, followed by the transfer of a methyl group from S-adenosyl-L-methionine to nm(5)s(2)U34, to form mnm(5)s(2)U34. The polypeptide is tRNA 5-methylaminomethyl-2-thiouridine biosynthesis bifunctional protein MnmC (Maricaulis maris (strain MCS10) (Caulobacter maris)).